Consider the following 177-residue polypeptide: MPEMVPAWVDGRLMPVEKLEAHQRGLRHKAISVFVMAGESVLIQRRAAGKYHTPGLWANTCCTHPRWGEAAADCAVRRLREELGITGLVTVFADQVEYRADVGSGLIEHEVVDIFVAEAPQDLPVAPDPEEVWETRWVDLHDLAREVEEHPERFTPWLRIYLADHMERIFGKLRVVQ.

2 residues coordinate Mn(2+): His22 and His28. In terms of domain architecture, Nudix hydrolase spans Leu26 to Ile160. Cys62 is an active-site residue. A Mn(2+)-binding site is contributed by His64. Glu82 is a binding site for Mg(2+). Residues Glu108 and Glu110 each contribute to the Mn(2+) site. Glu110 is a catalytic residue.

Belongs to the IPP isomerase type 1 family. Mg(2+) is required as a cofactor. The cofactor is Mn(2+).

Its subcellular location is the cytoplasm. The catalysed reaction is isopentenyl diphosphate = dimethylallyl diphosphate. The protein operates within isoprenoid biosynthesis; dimethylallyl diphosphate biosynthesis; dimethylallyl diphosphate from isopentenyl diphosphate: step 1/1. It functions in the pathway porphyrin-containing compound metabolism; chlorophyll biosynthesis. Catalyzes the 1,3-allylic rearrangement of the homoallylic substrate isopentenyl (IPP) to its highly electrophilic allylic isomer, dimethylallyl diphosphate (DMAPP). The chain is Isopentenyl-diphosphate Delta-isomerase from Cereibacter sphaeroides (strain ATCC 17025 / ATH 2.4.3) (Rhodobacter sphaeroides).